A 671-amino-acid chain; its full sequence is Vinexin (671 aa).

Glutamine 2 is subject to N-acetylalanine. At arginine 6 the chain carries Phosphoserine. Disordered regions lie at residues 46 to 111 (LNFQ…TKDS), 166 to 215 (TFEE…RPGA), 249 to 268 (LETG…EKPS), 295 to 324 (TRLP…AWSS), and 337 to 383 (SLSP…KKRK). Over residues 88–108 (PSASTKIPASQHTQNWSATWT) the composition is skewed to polar residues. A SoHo domain is found at 115 to 187 (DKRWVKYEGI…GAQQRPAHRP (73 aa)). Phosphoserine is present on serine 348. Polar residues predominate over residues 359 to 368 (PSSTRDPSAS). SH3 domains lie at 380–439 (KKRK…VLPA) and 454–515 (LEYG…VSRE). A binds to vinculin region spans residues 380 to 515 (KKRKAARLKF…PASYVQVSRE (136 aa)). A Phosphoserine modification is found at serine 395. A disordered region spans residues 519-611 (RLCDDGPQLP…LGTSSPNTSQ (93 aa)). Serine 530 is subject to Phosphoserine; by MAPK1. A compositionally biased stretch (low complexity) spans 535–553 (AAARSARHPSSPSALRSPA). A phosphoserine mark is found at serine 544, serine 545, serine 547, serine 551, and serine 563. The segment covering 560 to 584 (GQTSPRRTGFSFPTQEPRPQTQNLG) has biased composition (polar residues). The SH3 3 domain maps to 612 to 671 (IHWTPYRAMYQYRPQNEDELELREGDRVDVMQQCDDGWFVGVSRRTQKFGTFPGNYVAPV). Residues 612-671 (IHWTPYRAMYQYRPQNEDELELREGDRVDVMQQCDDGWFVGVSRRTQKFGTFPGNYVAPV) are binds to SOS.

Interacts with DLG5 through its third SH3 domain. Interacts with vinculin by the first two SH3 domains and the proline rich region of vinculin. Binds to SOS (guanine nucleotide exchange factor of RAS and RAC), through its third SH3 domain. The formation of this complex is down-regulated by phosphorylation of SOS. Interacts with INPPL1/SHIP2, SAFB2, SOCS7 and SRCIN1. Interacts with FASLG. Interacts with MAPK1/ERK2. Phosphorylated at Ser-530 by MAPK1/ERK2 during cell spreading. In terms of tissue distribution, both isoforms are expressed in different tissues like heart, placenta, brain, skeletal muscle and pancreas. Isoform beta is especially found in liver.

It is found in the cell junction. The protein resides in the cytoplasm. The protein localises to the cytoskeleton. It localises to the nucleus. In terms of biological role, vinexin alpha isoform promotes up-regulation of actin stress fiber formation. Vinexin beta isoform plays a role in cell spreading and enhances the activation of JNK/SAPK in response to EGF stimulation by using its third SH3 domain. In Homo sapiens (Human), this protein is Vinexin (SORBS3).